We begin with the raw amino-acid sequence, 394 residues long: Glutamyl-tRNA reductase (394 aa).

Substrate contacts are provided by residues 45–48, S99, 104–106, and Q110; these read TCNR and EEQ. The Nucleophile role is filled by C46. An NADP(+)-binding site is contributed by 175-180; the sequence is GLGNIG.

This sequence belongs to the glutamyl-tRNA reductase family. As to quaternary structure, homodimer.

It catalyses the reaction (S)-4-amino-5-oxopentanoate + tRNA(Glu) + NADP(+) = L-glutamyl-tRNA(Glu) + NADPH + H(+). The protein operates within porphyrin-containing compound metabolism; protoporphyrin-IX biosynthesis; 5-aminolevulinate from L-glutamyl-tRNA(Glu): step 1/2. In terms of biological role, catalyzes the NADPH-dependent reduction of glutamyl-tRNA(Glu) to glutamate 1-semialdehyde (GSA). This chain is Glutamyl-tRNA reductase, found in Caldicellulosiruptor saccharolyticus (strain ATCC 43494 / DSM 8903 / Tp8T 6331).